Here is a 2442-residue protein sequence, read N- to C-terminus: CREB-binding protein (2442 aa).

Disordered regions lie at residues 1 to 41 and 74 to 179; these read MAEN…NDLP and LRGG…CMNA. Residue Ala-2 is modified to N-acetylalanine. Residues 20-30 show a composition bias toward polar residues; that stretch reads PGFSANDSTDF. The span at 80-90 shows a compositional bias: low complexity; that stretch reads SSINPGIGNVS. Ser-121 is subject to Phosphoserine. Over residues 122 to 131 the composition is skewed to polar residues; that stretch reads PLSQGDSSAP. Ser-124 carries the post-translational modification Phosphoserine; by ATM. Residues 136-150 are compositionally biased toward low complexity; the sequence is QAASTSGPTPAASQA. The span at 151–172 shows a compositional bias: polar residues; the sequence is LNPQAQKQVGLATSSPATSQTG. Omega-N-methylarginine is present on Arg-220. The interval 227–410 is interaction with SRCAP; sequence PTPAMQGASS…GKACQVAHCA (184 aa). A disordered region spans residues 266-290; the sequence is KMGITGNTSPFGQPFSQAGGQPMGA. Over residues 270–284 the composition is skewed to polar residues; it reads TGNTSPFGQPFSQAG. A TAZ-type 1 zinc finger spans residues 347–433; it reads DPEKRKLIQQ…RHDCPVCLPL (87 aa). Positions 363, 367, 380, 385, 394, 398, 404, 409, 418, 422, 427, and 430 each coordinate Zn(2+). Positions 587 to 666 constitute a KIX domain; sequence GVRKGWHEHV…KIYKIQKELE (80 aa). Residues Arg-601 and Arg-625 each carry the asymmetric dimethylarginine modification. Position 657 is an N6-acetyllysine (Lys-657). 2 stretches are compositionally biased toward polar residues: residues 794–805 and 814–823; these read LPQNQFPSSSGA and PAQTGVSQGQ. Positions 794–1083 are disordered; that stretch reads LPQNQFPSSS…STSPSQPRKK (290 aa). Pro residues-rich tracts occupy residues 844 to 860 and 876 to 885; these read PCPP…PPPA and GMTPPQPAAP. Low complexity-rich tracts occupy residues 886–929 and 937–952; these read TQPS…VTPQ and PSVA…PTPV. The span at 973-988 shows a compositional bias: polar residues; sequence PTPSSVASAETNSQQP. A Glycyl lysine isopeptide (Lys-Gly) (interchain with G-Cter in SUMO1) cross-link involves residue Lys-998. Basic and acidic residues predominate over residues 1011–1021; sequence GESKGEPRSEM. Lys-1014 carries the N6-acetyllysine modification. Position 1030 is a phosphoserine (Ser-1030). A compositionally biased stretch (basic and acidic residues) spans 1032 to 1059; sequence VKEETDIAEQKSEPMEVDEKKPEVKVEV. Glycyl lysine isopeptide (Lys-Gly) (interchain with G-Cter in SUMO1) cross-links involve residues Lys-1033 and Lys-1056. Low complexity predominate over residues 1066-1078; it reads SSNGTASQSTSPS. Residue Ser-1076 is modified to Phosphoserine. Residues 1085–1192 enclose the Bromo domain; it reads FKPEELRQAL…EVFEQEIDPV (108 aa). The segment at 1124–1170 is interaction with histone; it reads DYFDIVKNPMDLSTIKRKLDTGQYQEPWQYVDDVWLMFNNAWLYNRK. Positions 1162–1180 are interaction with ASF1A; that stretch reads NNAWLYNRKTSRVYKFCSK. Lys-1216 bears the N6-acetyllysine mark. The CBP/p300-type HAT domain occupies 1323–1700; sequence KFSAKRLQTT…MLVELHTQGQ (378 aa). Phosphoserine; by IKKA is present on residues Ser-1382 and Ser-1386. The interaction with histone stretch occupies residues 1433–1435; it reads YLD. Acetyl-CoA-binding positions include 1434–1436, 1446–1447, Ile-1493, Arg-1498, and Trp-1502; these read LDS and RT. The tract at residues 1460 to 1891 is interaction with TRERF1; that stretch reads YVKKLGYVTG…LPSPTSAPPG (432 aa). The segment covering 1556–1568 has biased composition (basic and acidic residues); the sequence is LEQEEEERKKEES. The interval 1556 to 1615 is disordered; it reads LEQEEEERKKEESTAASETTEGSQGDSKNAKKKNNKKTNKNKSSISRANKKKPSMPNVSN. An N6-acetyllysine mark is found at Lys-1583, Lys-1591, Lys-1592, Lys-1595, and Lys-1597. A compositionally biased stretch (basic residues) spans 1585–1595; it reads AKKKNNKKTNK. The segment at 1702–1750 adopts a ZZ-type zinc-finger fold; that stretch reads RFVYTCNECKHHVETRWHCTVCEDYDLCINCYNTKSHAHKMVKWGLGLD. Residues Cys-1707, Cys-1710, Cys-1720, Cys-1723, Cys-1729, Cys-1732, His-1738, and His-1740 each contribute to the Zn(2+) site. Residues Lys-1741 and Lys-1744 each carry the N6-acetyllysine modification. Ser-1763 is subject to Phosphoserine. Residues 1765-1846 form a TAZ-type 2 zinc finger; that stretch reads QESRRLSIQR…KCPVPFCLNI (82 aa). 2 disordered regions span residues 1874–1959 and 1977–2028; these read TRNV…VEAA and INNS…PLPQ. Residues 1900–1912 are compositionally biased toward pro residues; that stretch reads PQTPQPPAQPQPS. Residues 1925–1940 show a composition bias toward polar residues; it reads ARTQPPTTVSTGKPTS. Positions 1943–1954 are enriched in pro residues; sequence PAPPPPAQPPPA. A compositionally biased stretch (low complexity) spans 2018–2027; the sequence is PGQWQQAPLP. 3 positions are modified to phosphoserine: Ser-2063, Ser-2076, and Ser-2079. Low complexity-rich tracts occupy residues 2112-2137, 2146-2160, 2196-2219, 2228-2263, and 2294-2305; these read QPGM…HQQP, QAGV…QQQA, QLLQ…QGSA, HGQF…SMGQ, and RILQQQQMKQQI. Disordered stretches follow at residues 2112–2263 and 2294–2433; these read QPGM…SMGQ and RILQ…TTGD. Polar residues-rich tracts occupy residues 2315–2327 and 2334–2343; these read SPQQ…QPQA and QIATSLSNQV. Pro residues predominate over residues 2349–2372; sequence VQSPRPQSQPPHSSPSPRIQPQPS. The residue at position 2351 (Ser-2351) is a Phosphoserine. A compositionally biased stretch (polar residues) spans 2411–2424; the sequence is QLNTPSRSALSSEL.

As to quaternary structure, found in a complex containing NCOA2; NCOA3; IKKA; IKKB and IKBKG. Probably part of a complex with HIF1A and EP300. Interacts with GATA1; the interaction results in acetylation and enhancement of transcriptional activity of GATA1. Interacts with MAF and ZCCHC12. Interacts with DAXX; the interaction is dependent on CBP sumoylation and results in suppression of the transcriptional activity via recruitment of HDAC2 to DAXX. Interacts with phosphorylated CREB1. Interacts with CITED4 (C-terminal region). Interacts (via the TAZ-type 1 domain) with HIF1A. Interacts with SRCAP, CARM1, ELF3, MLLT7/FOXO4, N4BP2, NCOA1, NCOA3, NCOA6, PCAF, DDX5, DDX17, PELP1, PML, SMAD1, SMAD2, SMAD3, SPIB and TRERF1. Interacts with KLF1; the interaction results in acetylation of KLF1 and enhancement of its transcriptional activity. Interacts with MTDH. Interacts with NFATC4. Interacts with MAFG; the interaction acetylates MAFG in the basic region and stimulates NFE2 transcriptional activity through increasing its DNA-binding activity. Interacts with IRF2; the interaction acetylates IRF2 and regulates its activity on the H4 promoter. Interacts with IRF3 (when phosphorylated); forming the dsRNA-activated factor 1 (DRAF1), a complex which activates the transcription of the type I interferon genes. Interacts (via N-terminus) with SS18L1/CREST (via C-terminus). Interacts with MECOM. Interacts with CITED1 (via C-terminus). Interacts with FOXO1; the interaction acetylates FOXO1 and inhibits its transcriptional activity. Interacts with NPAS2, CLOCK and BMAL1. Interacts with ASF1A and ASF1B; this promotes histone acetylation. Interacts with acetylated TP53/p53 and with the acetylated histones H3 and H4. Interacts (via transactivation domain and C-terminus) with PCNA; the interaction occurs on chromatin in UV-irradiated damaged cells. Interacts with DHX9 (via N-terminus); this interaction mediates association with RNA polymerase II holoenzyme and stimulates CREB-dependent transcriptional activation. Interacts with SMAD4; negatively regulated by ZBTB7A. Interacts with DUX4 (via C-terminus). Forms a complex with KMT2A and CREB1. Interacts with DDX3X; this interaction may facilitate HNF4A acetylation. Interacts with MSX1; the interaction may inhibit MSX1 autoinactivation. Interacts with ACSS2. In terms of assembly, (Microbial infection) Interacts with HTLV-1 Tax, p30II and HBZ. (Microbial infection) Interacts with human herpes virus 8/HHV-8 protein vIRF-1; this interaction inhibits CREBBP binding to IRF3. As to quaternary structure, (Microbial infection) Interacts with HIV-1 Tat. Methylation of the KIX domain by CARM1 blocks association with CREB. This results in the blockade of CREB signaling, and in activation of apoptotic response. Post-translationally, phosphorylated by CHUK/IKKA at Ser-1382 and Ser-1386; these phosphorylations promote cell growth by switching the binding preference of CREBBP from TP53 to NF-kappa-B. Phosphorylated by _ at Ser-124 in response to DNA damage, promoting interaction with MRE11 and lactylation of MRE11. In terms of processing, sumoylation negatively regulates transcriptional activity via the recruitment of DAAX. Autoacetylation is required for binding to protein substrates, such as acetylated histones and acetylated TP53/p53. Autoacetylation is induced by glucose and fatty acids.

It localises to the cytoplasm. The protein localises to the nucleus. It carries out the reaction L-lysyl-[histone] + acetyl-CoA = N(6)-acetyl-L-lysyl-[histone] + CoA + H(+). The enzyme catalyses L-lysyl-[protein] + acetyl-CoA = N(6)-acetyl-L-lysyl-[protein] + CoA + H(+). The catalysed reaction is (S)-lactoyl-CoA + L-lysyl-[protein] = N(6)-[(S)-lactoyl]-L-lysyl-[protein] + CoA + H(+). In terms of biological role, acetylates histones, giving a specific tag for transcriptional activation. Mediates acetylation of histone H3 at 'Lys-18' and 'Lys-27' (H3K18ac and H3K27ac, respectively). Also acetylates non-histone proteins, like DDX21, FBL, IRF2, MAFG, NCOA3, POLR1E/PAF53 and FOXO1. Binds specifically to phosphorylated CREB and enhances its transcriptional activity toward cAMP-responsive genes. Acts as a coactivator of ALX1. Acts as a circadian transcriptional coactivator which enhances the activity of the circadian transcriptional activators: NPAS2-BMAL1 and CLOCK-BMAL1 heterodimers. Acetylates PCNA; acetylation promotes removal of chromatin-bound PCNA and its degradation during nucleotide excision repair (NER). Acetylates POLR1E/PAF53, leading to decreased association of RNA polymerase I with the rDNA promoter region and coding region. Acetylates DDX21, thereby inhibiting DDX21 helicase activity. Acetylates FBL, preventing methylation of 'Gln-105' of histone H2A (H2AQ104me). In addition to protein acetyltransferase, can use different acyl-CoA substrates, such as lactoyl-CoA, and is able to mediate protein lactylation. Catalyzes lactylation of MRE11 in response to DNA damage, thereby promoting DNA double-strand breaks (DSBs) via homologous recombination (HR). Functions as a transcriptional coactivator for SMAD4 in the TGF-beta signaling pathway. This Homo sapiens (Human) protein is CREB-binding protein.